The chain runs to 404 residues: Alpha-galactosidase A (404 aa).

The signal sequence occupies residues 1–23 (MRKQLLLGLGLVSALLVSVQASA). 2 cysteine pairs are disulfide-bonded: Cys45–Cys77 and Cys124–Cys154. The Nucleophile role is filled by Asp152. Position 185–189 (185–189 (EWGDN)) interacts with substrate. Asp207 acts as the Proton donor in catalysis.

This sequence belongs to the glycosyl hydrolase 27 family.

The enzyme catalyses Hydrolysis of terminal, non-reducing alpha-D-galactose residues in alpha-D-galactosides, including galactose oligosaccharides, galactomannans and galactolipids.. Functionally, hydrolyzes galactomannan found in plant cell wall, by cleaving alpha-1,6-D-galactose side-chains from the mannan backbone. Appears to act in synergy with mannanase (ManA) to elicit hydrolysis of galactomannan. Has greater activity against galactomannans with decreased degree of polymerisation values. To a lesser extent, is also able to degrade other galactosides containing alpha-1,6-linked D-galactose, such as melibiose and stachyose. The sequence is that of Alpha-galactosidase A (agaA) from Cellvibrio japonicus (strain Ueda107) (Pseudomonas fluorescens subsp. cellulosa).